A 147-amino-acid polypeptide reads, in one-letter code: Response regulator Rcp1 (147 aa).

A Response regulatory domain is found at 10 to 135 (VILLVEDSKA…DLFKMVQGIE (126 aa)). A 4-aspartylphosphate modification is found at D68.

Post-translationally, phosphorylated by Cph1.

Functionally, forms a two-component system with Cph1 in which it acts as receiver substrate. The polypeptide is Response regulator Rcp1 (rcp1) (Synechocystis sp. (strain ATCC 27184 / PCC 6803 / Kazusa)).